The following is a 353-amino-acid chain: (-)-beta-caryophyllene synthase ((2E,6E)-farnesyl diphosphate cyclizing) (353 aa).

The Mg(2+) site is built by D85 and D89. The DDXXD motif signature appears at 85-89 (DDQFD). A substrate-binding site is contributed by R179. Positions 225 and 229 each coordinate Mg(2+). K232 provides a ligand contact to substrate. E233 contacts Mg(2+). 320-321 (RF) is a binding site for substrate.

This sequence belongs to the terpene synthase family. It depends on Mg(2+) as a cofactor.

It carries out the reaction (2E,6E)-farnesyl diphosphate = (-)-(E)-beta-caryophyllene + diphosphate. It functions in the pathway secondary metabolite biosynthesis; terpenoid biosynthesis. Its function is as follows. Catalyzes the conversion of (2E,6E)-farnesyl diphosphate (FPP) to yield the bicyclic sesquiterpene (2S,10R)-(-)-(E)-beta-caryophyllene via a probable 1,10-cyclization, which could involve the abstraction of the pyrophosphate from FPP to yield a (E,E)-germacradienyl cation. The polypeptide is (-)-beta-caryophyllene synthase ((2E,6E)-farnesyl diphosphate cyclizing) (ptlA) (Saccharothrix espanaensis (strain ATCC 51144 / DSM 44229 / JCM 9112 / NBRC 15066 / NRRL 15764)).